The sequence spans 193 residues: Protein SINE3 (193 aa).

Residues 15-35 (SELGAKRLKDPEMKNRKVTTE) are disordered. Residues 18-35 (GAKRLKDPEMKNRKVTTE) are compositionally biased toward basic and acidic residues. Residues 155–193 (VTVKFRIVLLSFILWAILAAIVVFFSSGEERAYRGPLPT) enclose the KASH domain. Residues 161 to 181 (IVLLSFILWAILAAIVVFFSS) form a helical membrane-spanning segment. A Required for nuclear localization motif is present at residues 190 to 193 (PLPT).

As to quaternary structure, interacts with SUN1 and SUN2.

It is found in the nucleus membrane. The polypeptide is Protein SINE3 (Arabidopsis thaliana (Mouse-ear cress)).